The following is a 584-amino-acid chain: uncharacterized protein (584 aa).

11 PbH1 repeats span residues 100–128, 139–161, 173–195, 196–225, 236–266, 313–333, 334–356, 357–382, 406–427, 456–478, and 529–554; these read QENITISGGQIIGERDEHTYASAGIRSTH, CSNVVIDDVKISDFTGDGIIVSP, SEQIIIRRCEVRRSRRNNISITG, CDMVTVEECLIEDAGTGNGTAPKFGIDIEG, PINVSIRNNHFVGNVSSSVTNFNGYGILIEG, TSDAVIAGNLITGFSTGIDVR, GKSVLVTNNKISNFENTGILVYQ, SSDVKVDGNQIQNGLSETRRSIGLRA, GGNMIIKDNLLRKFSRGIWIAQ, NAGAIIKNNTFKEFKNYPIYCST, and SAGSIISGNTINNLSAGTATAIQTNT.

This is an uncharacterized protein from Bacillus subtilis (strain 168).